A 368-amino-acid polypeptide reads, in one-letter code: Agmatine deiminase (368 aa).

Residue Cys-357 is the Amidino-cysteine intermediate of the active site.

This sequence belongs to the agmatine deiminase family. Homodimer.

It carries out the reaction agmatine + H2O = N-carbamoylputrescine + NH4(+). It functions in the pathway amine and polyamine biosynthesis; putrescine biosynthesis via agmatine pathway; N-carbamoylputrescine from agmatine: step 1/1. In terms of biological role, mediates the hydrolysis of agmatine into N-carbamoylputrescine in the arginine decarboxylase (ADC) pathway of putrescine biosynthesis, a basic polyamine. This is Agmatine deiminase from Pseudomonas putida (strain ATCC 700007 / DSM 6899 / JCM 31910 / BCRC 17059 / LMG 24140 / F1).